Consider the following 333-residue polypeptide: Heat shock transcription factor, X-linked member 4 (333 aa).

The tract at residues 1 to 66 (MASQNTEQEY…QDNSPPEDRN (66 aa)) is disordered. Over residues 29 to 39 (GSSPDPNPDSS) the composition is skewed to low complexity. Polar residues predominate over residues 49–60 (AMSQDPGSQDNS). A DNA-binding region spans residues 79-182 (FRLSFPRKLW…PRLLENIQRK (104 aa)). The disordered stretch occupies residues 227–275 (QGAPSVQGPSGTQSFRRSGMWSKKSATRHPLGNGPPQEPNGPSWEGTSG). A compositionally biased stretch (polar residues) spans 228-242 (GAPSVQGPSGTQSFR).

Belongs to the HSF family.

The protein resides in the nucleus. The chain is Heat shock transcription factor, X-linked member 4 from Homo sapiens (Human).